The chain runs to 328 residues: DNA-directed RNA polymerase subunit alpha (328 aa).

An alpha N-terminal domain (alpha-NTD) region spans residues 1–231; it reads MIQQMQMPEK…DHVRLFSLFS (231 aa). The alpha C-terminal domain (alpha-CTD) stretch occupies residues 252-328; sequence MRKLLMTRIE…MEVTKYRLNQ (77 aa).

The protein belongs to the RNA polymerase alpha chain family. As to quaternary structure, homodimer. The RNAP catalytic core consists of 2 alpha, 1 beta, 1 beta' and 1 omega subunit. When a sigma factor is associated with the core the holoenzyme is formed, which can initiate transcription.

The enzyme catalyses RNA(n) + a ribonucleoside 5'-triphosphate = RNA(n+1) + diphosphate. Functionally, DNA-dependent RNA polymerase catalyzes the transcription of DNA into RNA using the four ribonucleoside triphosphates as substrates. This Chloroherpeton thalassium (strain ATCC 35110 / GB-78) protein is DNA-directed RNA polymerase subunit alpha.